A 1496-amino-acid chain; its full sequence is Chromosome partition protein MukB (1496 aa).

ATP is bound at residue 63–70 (GGNGAGKS). Coiled coils occupy residues 328 to 493 (KLEL…QRLS), 536 to 632 (KMQA…APAW), 808 to 832 (RAAR…HAER), 861 to 1171 (NPEE…SAEE), and 1235 to 1291 (IDAI…LQNI). Residues 694–811 (PDGSDDVRLN…EVPLFGRAAR (118 aa)) form a flexible hinge region. The segment covering 1082–1091 (RARSRRDELQ) has biased composition (basic and acidic residues). Positions 1082–1101 (RARSRRDELQQRLSQQRSRK) are disordered.

The protein belongs to the SMC family. MukB subfamily. Homodimerization via its hinge domain. Binds to DNA via its C-terminal region. Interacts, and probably forms a ternary complex, with MukE and MukF via its C-terminal region. The complex formation is stimulated by calcium or magnesium. Interacts with tubulin-related protein FtsZ.

It is found in the cytoplasm. It localises to the nucleoid. Plays a central role in chromosome condensation, segregation and cell cycle progression. Functions as a homodimer, which is essential for chromosome partition. Involved in negative DNA supercoiling in vivo, and by this means organize and compact chromosomes. May achieve or facilitate chromosome segregation by condensation DNA from both sides of a centrally located replisome during cell division. This is Chromosome partition protein MukB from Actinobacillus pleuropneumoniae serotype 5b (strain L20).